The sequence spans 250 residues: Probable septum site-determining protein MinC (250 aa).

The disordered stretch occupies residues 110–143 (SGARERPLEPEPEVVKKPEPAPAPPPPPEPEVRP). The span at 112 to 128 (ARERPLEPEPEVVKKPE) shows a compositional bias: basic and acidic residues. A compositionally biased stretch (pro residues) spans 129–138 (PAPAPPPPPE).

It belongs to the MinC family. Interacts with MinD and FtsZ.

Its function is as follows. Cell division inhibitor that blocks the formation of polar Z ring septums. Rapidly oscillates between the poles of the cell to destabilize FtsZ filaments that have formed before they mature into polar Z rings. Prevents FtsZ polymerization. The sequence is that of Probable septum site-determining protein MinC from Pseudomonas putida (strain ATCC 47054 / DSM 6125 / CFBP 8728 / NCIMB 11950 / KT2440).